Consider the following 418-residue polypeptide: NADH-quinone oxidoreductase subunit D (418 aa).

Belongs to the complex I 49 kDa subunit family. As to quaternary structure, NDH-1 is composed of 14 different subunits. Subunits NuoB, C, D, E, F, and G constitute the peripheral sector of the complex.

The protein localises to the cell inner membrane. The catalysed reaction is a quinone + NADH + 5 H(+)(in) = a quinol + NAD(+) + 4 H(+)(out). NDH-1 shuttles electrons from NADH, via FMN and iron-sulfur (Fe-S) centers, to quinones in the respiratory chain. The immediate electron acceptor for the enzyme in this species is believed to be ubiquinone. Couples the redox reaction to proton translocation (for every two electrons transferred, four hydrogen ions are translocated across the cytoplasmic membrane), and thus conserves the redox energy in a proton gradient. In Methylacidiphilum infernorum (isolate V4) (Methylokorus infernorum (strain V4)), this protein is NADH-quinone oxidoreductase subunit D.